The sequence spans 56 residues: Photosystem II assembly protein Psb34 (56 aa).

Topologically, residues 1–33 (MRYTTDEGGRLNNFAIEPKVYQAQPWTPQQKVR) are cytoplasmic. Residues 34–54 (AALLVGGGLLLVAGLVAIAVG) traverse the membrane as a helical segment. Residues 55–56 (VS) are Extracellular-facing.

Part of photosystem II (PSII) assembly intermediate complex PSII-I; crystallized from a strain without psbJ, it forms monomeric PSII before addition of the oxygen evolving complex. PSII-I includes 3 assembly factors not found in mature PSII (Psb27, Psb28 and Psb34). The N-terminus of Psb34 (this protein) binds to CP47 (psbB) in close proximity to PsbH on the cytoplasmic face of PSII.

The protein resides in the cellular thylakoid membrane. Its function is as follows. Involved in photosystem II (PSII) assembly and/or repair, probably in conversion of late PSII assembly intermediates into mature dimeric PSII. The sequence is that of Photosystem II assembly protein Psb34 from Thermosynechococcus vestitus (strain NIES-2133 / IAM M-273 / BP-1).